The chain runs to 252 residues: Carbohydrate deacetylase (252 aa).

Mg(2+) is bound by residues His59 and His122.

The protein belongs to the YdjC deacetylase family. As to quaternary structure, homodimer. Mg(2+) is required as a cofactor.

In terms of biological role, probably catalyzes the deacetylation of acetylated carbohydrates an important step in the degradation of oligosaccharides. In Vibrio vulnificus (strain CMCP6), this protein is Carbohydrate deacetylase.